We begin with the raw amino-acid sequence, 414 residues long: 2,3-diketo-5-methylthiopentyl-1-phosphate enolase (414 aa).

The Proton acceptor role is filled by lysine 99. Substrate-binding positions include lysine 148, 174–177, histidine 265, glycine 338, and 360–361; these read KDDE and GG. Residues lysine 174, aspartate 176, and glutamate 177 each coordinate Mg(2+). At lysine 174 the chain carries N6-carboxylysine.

It belongs to the RuBisCO large chain family. Type IV subfamily. Homodimer. Mg(2+) is required as a cofactor.

It carries out the reaction 5-methylsulfanyl-2,3-dioxopentyl phosphate = 2-hydroxy-5-methylsulfanyl-3-oxopent-1-enyl phosphate. Its pathway is amino-acid biosynthesis; L-methionine biosynthesis via salvage pathway; L-methionine from S-methyl-5-thio-alpha-D-ribose 1-phosphate: step 3/6. In terms of biological role, catalyzes the enolization of 2,3-diketo-5-methylthiopentyl-1-phosphate (DK-MTP-1-P) into 2-hydroxy-3-keto-5-methylthiopentenyl-1-phosphate (HK-MTPenyl-1-P). The polypeptide is 2,3-diketo-5-methylthiopentyl-1-phosphate enolase (Bacillus cereus (strain AH820)).